A 360-amino-acid chain; its full sequence is MLYALFMQLGSLYHGFYVFQYLTLRGVLATLTALVLSLFIGPFFIARLRRYKIGQMVRNDGPETHLIKQGTPTMGGALILLVVILTTLLWSDLGNPLVWVAVLTTLAFGAIGFVDDWRKLRRQNSKGLSARAKYGLQSLVAFAAGGVLYALASNPVETSLILPFIPHVLIPMGAGFIVFSYFVIVGTSNAVNLTDGLDGLAIVPTVMVAGALGVFAYVSGNAVFARYLDVPWVPGSGQMLIFCGALVGAGLGFLWFNTYPADVFMGDTGALALGAALAIVAIVARQELVLFIMGGVFVVETLSVIIQVVSFRLTGKRVFRMAPLHHHFEKKGWPEPRVAVRFWIITVILVLVGLSSLKIR.

A run of 10 helical transmembrane segments spans residues 26-46, 70-90, 94-114, 136-156, 164-184, 199-219, 236-256, 263-283, 289-309, and 339-359; these read GVLATLTALVLSLFIGPFFIA, GTPTMGGALILLVVILTTLLW, GNPLVWVAVLTTLAFGAIGFV, LQSLVAFAAGGVLYALASNPV, FIPHVLIPMGAGFIVFSYFVI, GLAIVPTVMVAGALGVFAYVS, SGQMLIFCGALVGAGLGFLWF, VFMGDTGALALGAALAIVAIV, VLFIMGGVFVVETLSVIIQVV, and AVRFWIITVILVLVGLSSLKI.

This sequence belongs to the glycosyltransferase 4 family. MraY subfamily. Mg(2+) is required as a cofactor.

The protein resides in the cell inner membrane. The enzyme catalyses UDP-N-acetyl-alpha-D-muramoyl-L-alanyl-gamma-D-glutamyl-meso-2,6-diaminopimeloyl-D-alanyl-D-alanine + di-trans,octa-cis-undecaprenyl phosphate = di-trans,octa-cis-undecaprenyl diphospho-N-acetyl-alpha-D-muramoyl-L-alanyl-D-glutamyl-meso-2,6-diaminopimeloyl-D-alanyl-D-alanine + UMP. It participates in cell wall biogenesis; peptidoglycan biosynthesis. Its function is as follows. Catalyzes the initial step of the lipid cycle reactions in the biosynthesis of the cell wall peptidoglycan: transfers peptidoglycan precursor phospho-MurNAc-pentapeptide from UDP-MurNAc-pentapeptide onto the lipid carrier undecaprenyl phosphate, yielding undecaprenyl-pyrophosphoryl-MurNAc-pentapeptide, known as lipid I. This is Phospho-N-acetylmuramoyl-pentapeptide-transferase from Acidithiobacillus ferrooxidans (strain ATCC 23270 / DSM 14882 / CIP 104768 / NCIMB 8455) (Ferrobacillus ferrooxidans (strain ATCC 23270)).